An 88-amino-acid polypeptide reads, in one-letter code: Small ribosomal subunit protein uS17 (88 aa).

It belongs to the universal ribosomal protein uS17 family. As to quaternary structure, part of the 30S ribosomal subunit.

Its function is as follows. One of the primary rRNA binding proteins, it binds specifically to the 5'-end of 16S ribosomal RNA. This Mycoplasmopsis agalactiae (strain NCTC 10123 / CIP 59.7 / PG2) (Mycoplasma agalactiae) protein is Small ribosomal subunit protein uS17.